Reading from the N-terminus, the 338-residue chain is tRNA N6-adenosine threonylcarbamoyltransferase (338 aa).

Fe cation is bound by residues His111 and His115. Substrate-binding positions include 134-138 (LVSGG), Asp167, Gly180, and Asn272. Asp300 is a binding site for Fe cation.

This sequence belongs to the KAE1 / TsaD family. It depends on Fe(2+) as a cofactor.

The protein localises to the cytoplasm. It carries out the reaction L-threonylcarbamoyladenylate + adenosine(37) in tRNA = N(6)-L-threonylcarbamoyladenosine(37) in tRNA + AMP + H(+). Its function is as follows. Required for the formation of a threonylcarbamoyl group on adenosine at position 37 (t(6)A37) in tRNAs that read codons beginning with adenine. Is involved in the transfer of the threonylcarbamoyl moiety of threonylcarbamoyl-AMP (TC-AMP) to the N6 group of A37, together with TsaE and TsaB. TsaD likely plays a direct catalytic role in this reaction. The sequence is that of tRNA N6-adenosine threonylcarbamoyltransferase from Vibrio atlanticus (strain LGP32) (Vibrio splendidus (strain Mel32)).